A 304-amino-acid chain; its full sequence is UDP-3-O-acyl-N-acetylglucosamine deacetylase (304 aa).

Histidine 78, histidine 237, and aspartate 241 together coordinate Zn(2+). Residue histidine 264 is the Proton donor of the active site.

It belongs to the LpxC family. It depends on Zn(2+) as a cofactor.

The enzyme catalyses a UDP-3-O-[(3R)-3-hydroxyacyl]-N-acetyl-alpha-D-glucosamine + H2O = a UDP-3-O-[(3R)-3-hydroxyacyl]-alpha-D-glucosamine + acetate. It functions in the pathway glycolipid biosynthesis; lipid IV(A) biosynthesis; lipid IV(A) from (3R)-3-hydroxytetradecanoyl-[acyl-carrier-protein] and UDP-N-acetyl-alpha-D-glucosamine: step 2/6. Functionally, catalyzes the hydrolysis of UDP-3-O-myristoyl-N-acetylglucosamine to form UDP-3-O-myristoylglucosamine and acetate, the committed step in lipid A biosynthesis. The polypeptide is UDP-3-O-acyl-N-acetylglucosamine deacetylase (Legionella pneumophila (strain Paris)).